We begin with the raw amino-acid sequence, 494 residues long: Syntaphilin (494 aa).

The tract at residues 1-75 (MAMSLPGSRR…GIKPPTPEQY (75 aa)) is disordered. Low complexity predominate over residues 7–49 (GSRRTSAGSRRRTSPPVSVRDAYGTSSLSSSSNSGSYKGSDSS). Positions 79-161 (LQQKEVCIRH…VKNNLIDKDK (83 aa)) form a coiled coil. Disordered regions lie at residues 191-246 (MAKE…SGFA) and 338-398 (CGTD…GQSV). A phosphoserine mark is found at Ser-200 and Ser-204. Over residues 207-217 (RSLTRSSTYTK) the composition is skewed to polar residues. Thr-214 bears the Phosphothreonine mark. Ser-219 bears the Phosphoserine mark. Positions 230-246 (GDPSSGSAEDGADSGFA) are enriched in low complexity. Residues 344 to 353 (SGDRCPELDA) show a composition bias toward basic and acidic residues. The helical transmembrane segment at 425–444 (YIVDLLAVVVPAVPTVAWLC) threads the bilayer.

In terms of assembly, binds to STX1A. Interacts with DNM1; this interaction inhibits the binding of DNM1 to AMPH and DNM1-receptor-mediated endocytosis. In terms of tissue distribution, brain specific. Found in synapses.

The protein localises to the membrane. It localises to the synapse. Its subcellular location is the synaptosome. Inhibits SNARE complex formation by absorbing free STX1A. The sequence is that of Syntaphilin from Homo sapiens (Human).